A 565-amino-acid polypeptide reads, in one-letter code: Arginine--tRNA ligase (565 aa).

Positions 126–136 match the 'HIGH' region motif; the sequence is ANPTGPLHIGH.

It belongs to the class-I aminoacyl-tRNA synthetase family. As to quaternary structure, monomer.

The protein localises to the cytoplasm. The catalysed reaction is tRNA(Arg) + L-arginine + ATP = L-arginyl-tRNA(Arg) + AMP + diphosphate. This chain is Arginine--tRNA ligase, found in Wolbachia sp. subsp. Brugia malayi (strain TRS).